The sequence spans 516 residues: Probable cytochrome P450 9f2 (516 aa).

Cys460 contacts heme.

This sequence belongs to the cytochrome P450 family. The cofactor is heme.

The protein localises to the endoplasmic reticulum membrane. It is found in the microsome membrane. Its function is as follows. May be involved in the metabolism of insect hormones and in the breakdown of synthetic insecticides. The polypeptide is Probable cytochrome P450 9f2 (Cyp9f2) (Drosophila melanogaster (Fruit fly)).